Consider the following 436-residue polypeptide: Histidine--tRNA ligase (436 aa).

The protein belongs to the class-II aminoacyl-tRNA synthetase family.

The protein resides in the cytoplasm. It catalyses the reaction tRNA(His) + L-histidine + ATP = L-histidyl-tRNA(His) + AMP + diphosphate + H(+). This is Histidine--tRNA ligase from Thermococcus kodakarensis (strain ATCC BAA-918 / JCM 12380 / KOD1) (Pyrococcus kodakaraensis (strain KOD1)).